A 461-amino-acid polypeptide reads, in one-letter code: Carboxypeptidase Rv3627c (461 aa).

Positions 1 to 28 are cleaved as a signal peptide; sequence MGPTRWRKSTHVVVGAAVLAFVAVVVAA. Residue Ser-114 is the Acyl-ester intermediate of the active site. Residue Lys-117 is the Proton acceptor of the active site. Ser-295 is a catalytic residue.

The protein belongs to the peptidase S13 family.

Functionally, carboxypeptidase that cleaves terminal D-alanine from peptidoglycan in the mycobacterial cell wall. May cleave L-Lys-D-Ala and/or D-Ala-D-Ala peptide bonds. Exerts important effects on mycobacterial cell morphology and cell division. In Mycobacterium tuberculosis (strain ATCC 25618 / H37Rv), this protein is Carboxypeptidase Rv3627c.